An 84-amino-acid polypeptide reads, in one-letter code: Turripeptide IX-03 (84 aa).

The first 21 residues, 1-21 (MGFYMLLTVALLLTSLMNVEA), serve as a signal peptide directing secretion. The propeptide occupies 22–39 (TPVDQAERSALEKSGLGN). Disulfide bonds link Cys48–Cys70, Cys55–Cys74, and Cys60–Cys81.

In terms of tissue distribution, expressed by the venom duct.

It localises to the secreted. The polypeptide is Turripeptide IX-03 (Gemmula speciosa (Splendid gem-turris)).